The following is a 117-amino-acid chain: Large ribosomal subunit protein bL20 (117 aa).

It belongs to the bacterial ribosomal protein bL20 family.

In terms of biological role, binds directly to 23S ribosomal RNA and is necessary for the in vitro assembly process of the 50S ribosomal subunit. It is not involved in the protein synthesizing functions of that subunit. This chain is Large ribosomal subunit protein bL20, found in Wigglesworthia glossinidia brevipalpis.